Consider the following 552-residue polypeptide: MSLHLSQDFALKASAAVAVLLLAAWVRLRRRIQSKISNIPGPKPTSLLGNYSQLHSAEKGWEFFDEIHAKYGNVCRISTPVGCNDIIYLADPLALNHMNRRDEAKFDDPHEIHIMLQMVLGNKGLGATSGAEHHRQRKFLNPVFGPSYLRHMPPLFYEVTHRFLDAMRILCADGQREIDMSHWGTRVSLEFVGKGAIGFELDSLAIDSKPNLYGEEMKQGFVALSTPAARLAMKYFLPRIASLRTPKFNRWLLNLVPSPLVTIVKNFVWELDANSRTMFQQKKEALLKGGDALSEQSSKGKDLMTALIREHVLVDRADKVDEEEATSHFRTLLFAATDTSSSAILRTIQLLAEHPDVQTRLREEINTAKADADGDLSYEKLLALPLLDAVYRETLRLYPPASYIDRVAHEDVVLPLAFPITGVDGTQMSELVVPKGTVVTMSIVGVNRSTAIWGPDALVWNPDRWLAPLPETVKSSKMPGITSSIMTFLDGKRHCLGYRYVQMELKILISEIVCTLAFAPTEKHAKIEWPMGLTLSPFVDGKMSMPLKVSLA.

A helical transmembrane segment spans residues 9–26 (FALKASAAVAVLLLAAWV). 2 N-linked (GlcNAc...) asparagine glycosylation sites follow: Asn-50 and Asn-447. Cys-495 is a binding site for heme.

This sequence belongs to the cytochrome P450 family. Requires heme as cofactor.

The protein resides in the membrane. The catalysed reaction is (-)-cyatha-3,12-diene + reduced [NADPH--hemoprotein reductase] + O2 = erinacol + oxidized [NADPH--hemoprotein reductase] + H2O + H(+). It participates in secondary metabolite biosynthesis. Functionally, cytochrome P450 monooxygenase; part of the gene cluster that mediates the biosynthesis of erinacines, cyathane-xylosides that show unique biological activities, including leishmanicidal activity, stimulating activity for nerve growth-factor synthesis, and agonistic activity toward the kappa opioid receptor. Within the pathway, eriI hydroxylates cyatha-3,12-diene at C-14 of the seven-membered ring to yield erinacol. The first step of the erinacines biosynthesis pathway is catalyzed by the geranylgeranyl diphosphate (GGPP) synthase eriE via conversion of farnesyl pyrophosphate and isopentyl pyrophosphate into geranylgeranyl pyrophosphate (GGPP). GGPP is then substrate of the diterpene cyclase eriG for the production of cyatha-3,12-diene. The cytochrome P450 monooxygenase eriI then hydroxylates cyatha-3,12-diene at C-14 of the seven-membered ring to produce erinacol, which is further hydroxylated at C-15 by the cytochrome P450 monooxygenase eriC to yield cyathadiol. The cytochrome P450 monooxygenase eriA then catalyzes C-11 hydroxylation in the presence of the short chain dehydrogenase/reductase (SDR) eriH, which leads to the production of cyathatriol. The acetyltransferase eriL converts cyathatriol into 11-O-acetyl-cyathatriol. The SDR eriH catalyzes further oxidation of 11-O-acetyl-cyathatriol into 1-O-acetylcyathin A3. Finally, the glycosyl transferase eriJ tranfers xylose from UDP-xylose onto C-14 of 11-O-acetyl-cyathatriol to form eracine Q. EriJ is also able to convert 11-O-acetyl-cyathatriol to eracine Q2 by using UDP-D-glucose as cosubstrate, but at a lower rate. Its function is as follows. Cytochrome P450 monooxygenase; part of the gene cluster that mediates the biosynthesis of erinacines, cyathane-xylosides that show unique biological activities, including leishmanicidal activity, stimulating activity for nerve growth-factor synthesis, and agonistic activity toward the kappa opioid receptor. The geranylgeranyl diphosphate (GGPP) synthase eriE catalyzes the first step in erinacines biosynthesis via conversion of farnesyl pyrophosphate and isopentyl pyrophosphate into geranylgeranyl pyrophosphate (GGPP). GGPP is then substrate of the diterpene cyclase eriG for the production of cyatha-3,12-diene. EriG is unable to use geranyl diphosphate (GPP) or farnesyl diphosphate (FPP) as substrates. The cytochrome P450 monooxygenase eriI then hydroxylates cyatha-3,12-diene at C-14 of the seven-membered ring to produce erinacol, which is further hydroxylated at C-15 by the cytochrome P450 monooxygenase eriC to yield cyathadiol. The cytochrome P450 monooxygenase eriA then catalyzes C-11 hydroxylation in the presence of the short chain dehydrogenase/reductase (SDR) eriH, which leads to the production of cyathatriol. The acetyltransferase eriL converts cyathatriol into 11-O-acetyl-cyathatriol. The SDR eriH catalyzes further oxidation of 11-O-acetyl-cyathatriol into 1-O-acetylcyathin A3. Finally, the glycosyl transferase eriJ tranfers xylose from UDP-xylose onto C-14 of 11-O-acetyl-cyathatriol to form eracine Q. EriJ is also able to convert 11-O-acetyl-cyathatriol to eracine Q2 by using UDP-D-glucose as cosubstrate, but at a lower rate. In the absence of eriL and eriJ, the SDR eriH is able to convert cyathatriol to cyathin A3; this is likely a switching mechanism in the biosynthesis of cyathins (C-14 ketogroup)and erinacines (C-14 glycosylated group). The roles of the SDR eriB, the polyprenyl transferase eriF and the dehydrogenase eriK have still to be identified. The chain is Cytochrome P450 monooxyhenase eriI from Hericium erinaceus (Lion's mane mushroom).